Consider the following 187-residue polypeptide: Elongation factor P (187 aa).

This sequence belongs to the elongation factor P family.

The protein resides in the cytoplasm. The protein operates within protein biosynthesis; polypeptide chain elongation. Involved in peptide bond synthesis. Stimulates efficient translation and peptide-bond synthesis on native or reconstituted 70S ribosomes in vitro. Probably functions indirectly by altering the affinity of the ribosome for aminoacyl-tRNA, thus increasing their reactivity as acceptors for peptidyl transferase. In Syntrophus aciditrophicus (strain SB), this protein is Elongation factor P.